We begin with the raw amino-acid sequence, 804 residues long: Phenylalanine--tRNA ligase beta subunit (804 aa).

A tRNA-binding domain is found at 38–148; that stretch reads RAAFRAFTIA…ENAPVGTSFA (111 aa). Residues 401-476 enclose the B5 domain; sequence HTARVIDFPV…RIHGINRIDP (76 aa). Mg(2+)-binding residues include Asp-454, Asp-460, Glu-463, and Glu-464. The region spanning 710 to 803 is the FDX-ACB domain; it reads SLFQSLKRDY…VAKQTGGVLR (94 aa).

It belongs to the phenylalanyl-tRNA synthetase beta subunit family. Type 1 subfamily. As to quaternary structure, tetramer of two alpha and two beta subunits. Mg(2+) is required as a cofactor.

The protein localises to the cytoplasm. The catalysed reaction is tRNA(Phe) + L-phenylalanine + ATP = L-phenylalanyl-tRNA(Phe) + AMP + diphosphate + H(+). This is Phenylalanine--tRNA ligase beta subunit from Brucella melitensis biotype 1 (strain ATCC 23456 / CCUG 17765 / NCTC 10094 / 16M).